We begin with the raw amino-acid sequence, 203 residues long: dITP/XTP pyrophosphatase (203 aa).

8–13 (TANKGK) contributes to the substrate binding site. 2 residues coordinate Mg(2+): Glu41 and Asp70. Asp70 serves as the catalytic Proton acceptor. Residues Ser71, 153 to 156 (FGYD), Lys176, and 181 to 182 (HR) each bind substrate.

It belongs to the HAM1 NTPase family. In terms of assembly, homodimer. Mg(2+) serves as cofactor.

It catalyses the reaction XTP + H2O = XMP + diphosphate + H(+). It carries out the reaction dITP + H2O = dIMP + diphosphate + H(+). The enzyme catalyses ITP + H2O = IMP + diphosphate + H(+). Pyrophosphatase that catalyzes the hydrolysis of nucleoside triphosphates to their monophosphate derivatives, with a high preference for the non-canonical purine nucleotides XTP (xanthosine triphosphate), dITP (deoxyinosine triphosphate) and ITP. Seems to function as a house-cleaning enzyme that removes non-canonical purine nucleotides from the nucleotide pool, thus preventing their incorporation into DNA/RNA and avoiding chromosomal lesions. The sequence is that of dITP/XTP pyrophosphatase from Listeria innocua serovar 6a (strain ATCC BAA-680 / CLIP 11262).